Here is a 506-residue protein sequence, read N- to C-terminus: Cytochrome P450 monooxygenase TES1 (506 aa).

A helical transmembrane segment spans residues 26–46 (MSVVLAGLILLASIYFPRFMF). N167, N201, N298, and N427 each carry an N-linked (GlcNAc...) asparagine glycan. C440 contributes to the heme binding site.

This sequence belongs to the cytochrome P450 family. Requires heme as cofactor.

The protein resides in the membrane. Its pathway is phytotoxin biosynthesis. In terms of biological role, cytochrome P450 monooxygenase; part of the gene cluster that mediates the biosynthesis of the phytotoxin tentoxin, an inhibitor the F1-ATPase activity of chloroplasts, resulting in chlorosis in sensitive plants. Tentoxin is a cyclic tetrapeptide that consists of four amino acid residues: glycine (Gly), alanine (Ala), leucine (Leu), and dehydrophenylalanine (DPhe). In addition, both the Ala and DPhe residues are N-methylated. The nonribosomal peptide synthetase TES assembles tentoxin from the four substrate amino acids. The adenylation domains of each of the 4 modules are responsible for the activation of Gly, Ala, Leu and DPhe, respectively. In addition, the N-methyltransferase domains in the second and fourth modules of TES could be responsible for N-methylation of Ala and DPhe residues. Finally, the condensation domain located in the termination module probably catalyzes the formation of the intramolecular macrocyclization and then the release of tentoxin. The cytochrome P450 monooxygenase TES1 is predicted to be involved in the formation of DPhe. In Alternaria alternata (Alternaria rot fungus), this protein is Cytochrome P450 monooxygenase TES1.